A 212-amino-acid polypeptide reads, in one-letter code: Ribonuclease HII (212 aa).

The RNase H type-2 domain maps to 19 to 212 (CIIVGVDEVG…SKISYMFKNS (194 aa)). A divalent metal cation contacts are provided by Asp-25, Glu-26, and Asp-120.

It belongs to the RNase HII family. The cofactor is Mn(2+). Mg(2+) serves as cofactor.

It localises to the cytoplasm. The catalysed reaction is Endonucleolytic cleavage to 5'-phosphomonoester.. Its function is as follows. Endonuclease that specifically degrades the RNA of RNA-DNA hybrids. This chain is Ribonuclease HII, found in Ehrlichia ruminantium (strain Welgevonden).